We begin with the raw amino-acid sequence, 855 residues long: Inactive rhomboid protein 1 (855 aa).

Residues 1-36 (MSEARRDSTSSLQRKKPPWLKLDIPSAAPPAAEEPS) are disordered. The Cytoplasmic portion of the chain corresponds to 1-411 (MSEARRDSTS…HRPFFTYWLT (411 aa)). The span at 25-36 (PSAAPPAAEEPS) shows a compositional bias: low complexity. Residues serine 76 and serine 176 each carry the phosphoserine modification. Threonine 180 and threonine 183 each carry phosphothreonine. Serine 390 is modified (phosphoserine). The helical transmembrane segment at 412 to 432 (FVHSLVTVLAVCIYGIAPVGF) threads the bilayer. Residues 433–655 (SQHETVDSVL…NPEVPDQFYR (223 aa)) are Lumenal-facing. N-linked (GlcNAc...) asparagine glycosylation is present at asparagine 583. The helical transmembrane segment at 656–676 (LWLSLFLHAGILHCLVSICFQ) threads the bilayer. Over 677–691 (MTVLRDLEKLAGWHR) the chain is Cytoplasmic. The chain crosses the membrane as a helical span at residues 692-712 (IAIIYLLSGVTGNLASAIFLP). Residues 713 to 714 (YR) are Lumenal-facing. The helical transmembrane segment at 715 to 735 (AEVGPAGSQFGILACLFVELF) threads the bilayer. Over 736–746 (QSWQILARPWR) the chain is Cytoplasmic. Residues 747–767 (AFFKLLAVVLFLFTFGLLPWI) traverse the membrane as a helical segment. At 768–772 (DNFAH) the chain is on the lumenal side. A helical membrane pass occupies residues 773-793 (ISGFISGLFLSFAFLPYISFG). The Cytoplasmic portion of the chain corresponds to 794–803 (KFDLYRKRCQ). Residues 804 to 824 (IIVFQVVFLGLLAGLVVLFYF) form a helical membrane-spanning segment. Topologically, residues 825-855 (YPVRCEWCEFLTCIPFTDKFCEKYELDAQLH) are lumenal.

It belongs to the peptidase S54 family. Homodimer, or homooligomer. Interacts with TGFA and HBEGF. Interacts with EGF; may retain EGF in the endoplasmic reticulum and regulates its degradation through the endoplasmic reticulum-associated degradation (ERAD). Interacts (via cytoplasmic N-terminus) with FRMD8/iTAP; this interaction leads to mutual protein stabilization. Interacts with ADAM17/TACE.

The protein resides in the endoplasmic reticulum membrane. It is found in the golgi apparatus membrane. Functionally, regulates ADAM17 protease, a sheddase of the epidermal growth factor (EGF) receptor ligands and TNF, thereby plays a role in sleep, cell survival, proliferation, migration and inflammation. Does not exhibit any protease activity on its own. This Plecturocebus moloch (Dusky titi monkey) protein is Inactive rhomboid protein 1 (RHBDF1).